We begin with the raw amino-acid sequence, 365 residues long: Eukaryotic translation initiation factor 3 subunit H (365 aa).

Residues Val-11 to Phe-160 enclose the MPN domain. Residues Tyr-273–Gln-303 adopt a coiled-coil conformation.

It belongs to the eIF-3 subunit H family. As to quaternary structure, component of the eukaryotic translation initiation factor 3 (eIF-3) complex.

The protein resides in the cytoplasm. In terms of biological role, component of the eukaryotic translation initiation factor 3 (eIF-3) complex, which is involved in protein synthesis of a specialized repertoire of mRNAs and, together with other initiation factors, stimulates binding of mRNA and methionyl-tRNAi to the 40S ribosome. The eIF-3 complex specifically targets and initiates translation of a subset of mRNAs involved in cell proliferation. In Coccidioides immitis (strain RS) (Valley fever fungus), this protein is Eukaryotic translation initiation factor 3 subunit H.